The sequence spans 299 residues: tRNA pseudouridine synthase B (299 aa).

Asp45 serves as the catalytic Nucleophile.

Belongs to the pseudouridine synthase TruB family. Type 1 subfamily.

It carries out the reaction uridine(55) in tRNA = pseudouridine(55) in tRNA. In terms of biological role, responsible for synthesis of pseudouridine from uracil-55 in the psi GC loop of transfer RNAs. In Streptomyces griseus subsp. griseus (strain JCM 4626 / CBS 651.72 / NBRC 13350 / KCC S-0626 / ISP 5235), this protein is tRNA pseudouridine synthase B.